Reading from the N-terminus, the 410-residue chain is Heat stress transcription factor A-9 (410 aa).

The segment at 1–44 (MGSKKRSPQHPAAAAPPPAVGGGGGGEVSGDGGASTANGPVVPK) is disordered. The span at 20–33 (VGGGGGGEVSGDGG) shows a compositional bias: gly residues. Residues 171–246 (GLEKEVETLK…QLVQQQQQQR (76 aa)) adopt a coiled-coil conformation. Positions 179-229 (LKRDKALLMQQLVDLRHYQQTSNLEVQNLIERLQVMEQNQQQMMALLAIVV) are hydrophobic repeat HR-A/B. A Nuclear localization signal motif is present at residues 256-260 (SKKRR). The Nuclear export signal motif lies at 279–290 (AHIVEYLPPVPE).

The protein belongs to the HSF family. Class A subfamily. As to quaternary structure, homotrimer. Exhibits temperature-dependent phosphorylation.

It localises to the cytoplasm. Its subcellular location is the nucleus. Functionally, transcriptional regulator that specifically binds DNA of heat shock promoter elements (HSE). The sequence is that of Heat stress transcription factor A-9 (HSFA9) from Oryza sativa subsp. japonica (Rice).